The chain runs to 910 residues: Protein kinase 3 (910 aa).

Residues 119-129 (SPSGGGGGGSG) show a composition bias toward gly residues. Disordered stretches follow at residues 119 to 239 (SPSG…PNLI), 270 to 295 (FNNN…KTPT), and 391 to 454 (NKDD…NDKK). Composition is skewed to low complexity over residues 130 to 160 (VSSN…QPTS), 169 to 196 (LSES…QSTS), 209 to 220 (GLSGSSTSSSSA), 227 to 239 (NNNA…PNLI), 270 to 290 (FNNN…TTST), and 422 to 450 (INQP…TSQT). Positions 498–763 (FELLKVLGVG…FEEISSHPFF (266 aa)) constitute a Protein kinase domain. Residues 504 to 512 (LGVGSFGRV) and K527 each bind ATP. D621 serves as the catalytic Proton acceptor. The residue at position 664 (T664) is a Phosphothreonine; by autocatalysis. The region spanning 764-854 (ELIPWRMLES…NKEEEDGIMG (91 aa)) is the AGC-kinase C-terminal domain. Disordered regions lie at residues 786-812 (EISL…TLSC) and 859-910 (IGSI…KGSV). 2 stretches are compositionally biased toward low complexity: residues 788-809 (SLPN…NNLT) and 859-886 (IGSI…SGGS).

Belongs to the protein kinase superfamily. AGC Ser/Thr protein kinase family.

The catalysed reaction is L-seryl-[protein] + ATP = O-phospho-L-seryl-[protein] + ADP + H(+). It carries out the reaction L-threonyl-[protein] + ATP = O-phospho-L-threonyl-[protein] + ADP + H(+). This is Protein kinase 3 (pkgC) from Dictyostelium discoideum (Social amoeba).